Reading from the N-terminus, the 101-residue chain is Protein Tat (101 aa).

Residues 1–12 (MEPVDPRLEPWK) show a composition bias toward basic and acidic residues. The tract at residues 1–24 (MEPVDPRLEPWKHPGSQPKTASNN) is disordered. The tract at residues 1-24 (MEPVDPRLEPWKHPGSQPKTASNN) is interaction with human CREBBP. The tract at residues 1-48 (MEPVDPRLEPWKHPGSQPKTASNNCYCKRCCLHCQVCFTKKGLGISYG) is transactivation. A cysteine-rich region spans residues 22 to 37 (SNNCYCKRCCLHCQVC). Zn(2+)-binding residues include cysteine 25 and cysteine 27. An N6-acetyllysine; by host PCAF modification is found at lysine 28. 4 residues coordinate Zn(2+): cysteine 30, histidine 33, cysteine 34, and cysteine 37. Residues 38-48 (FTKKGLGISYG) form a core region. A disordered region spans residues 45-101 (ISYGRKKRRQRRRAPQDSKTHQVSLSKQPASQPRGDPTGPKESKKKVERETETDPED). Over residues 48–57 (GRKKRRQRRR) the composition is skewed to basic residues. The Nuclear localization signal, RNA-binding (TAR), and protein transduction signature appears at 49–57 (RKKRRQRRR). Residues 49-86 (RKKRRQRRRAPQDSKTHQVSLSKQPASQPRGDPTGPKE) form an interaction with the host capping enzyme RNGTT region. 2 positions are modified to N6-acetyllysine; by host EP300 and GCN5L2: lysine 50 and lysine 51. Arginine 52 and arginine 53 each carry asymmetric dimethylarginine; by host PRMT6. The segment covering 65–75 (HQVSLSKQPAS) has biased composition (polar residues). Residue lysine 71 forms a Glycyl lysine isopeptide (Lys-Gly) (interchain with G-Cter in ubiquitin) linkage. Positions 78–80 (RGD) match the Cell attachment site motif. Basic and acidic residues predominate over residues 83–101 (GPKESKKKVERETETDPED).

The protein belongs to the lentiviruses Tat family. Interacts with host CCNT1. Associates with the P-TEFb complex composed at least of Tat, P-TEFb (CDK9 and CCNT1), TAR RNA, RNA Pol II. Recruits the HATs CREBBP, TAF1/TFIID, EP300, PCAF and GCN5L2. Interacts with host KAT5/Tip60; this interaction targets the latter to degradation. Interacts with the host deacetylase SIRT1. Interacts with host capping enzyme RNGTT; this interaction stimulates RNGTT. Binds to host KDR, and to the host integrins ITGAV/ITGB3 and ITGA5/ITGB1. Interacts with host KPNB1/importin beta-1 without previous binding to KPNA1/importin alpha-1. Interacts with EIF2AK2. Interacts with host nucleosome assembly protein NAP1L1; this interaction may be required for the transport of Tat within the nucleus, since the two proteins interact at the nuclear rim. Interacts with host C1QBP/SF2P32; this interaction involves lysine-acetylated Tat. Interacts with the host chemokine receptors CCR2, CCR3 and CXCR4. Interacts with host DPP4/CD26; this interaction may trigger an anti-proliferative effect. Interacts with host LDLR. Interacts with the host extracellular matrix metalloproteinase MMP1. Interacts with host PRMT6; this interaction mediates Tat's methylation. Interacts with, and is ubiquitinated by MDM2/Hdm2. Interacts with host PSMC3 and HTATIP2. Interacts with STAB1; this interaction may overcome SATB1-mediated repression of IL2 and IL2RA (interleukin) in T cells by binding to the same domain than HDAC1. Interacts (when acetylated) with human CDK13, thereby increasing HIV-1 mRNA splicing and promoting the production of the doubly spliced HIV-1 protein Nef. Interacts with host TBP; this interaction modulates the activity of transcriptional pre-initiation complex. Interacts with host RELA. Interacts with host PLSCR1; this interaction negatively regulates Tat transactivation activity by altering its subcellular distribution. Asymmetrical arginine methylation by host PRMT6 seems to diminish the transactivation capacity of Tat and affects the interaction with host CCNT1. Post-translationally, acetylation by EP300, CREBBP, GCN5L2/GCN5 and PCAF regulates the transactivation activity of Tat. EP300-mediated acetylation of Lys-50 promotes dissociation of Tat from the TAR RNA through the competitive binding to PCAF's bromodomain. In addition, the non-acetylated Tat's N-terminus can also interact with PCAF. PCAF-mediated acetylation of Lys-28 enhances Tat's binding to CCNT1. Lys-50 is deacetylated by SIRT1. In terms of processing, polyubiquitination by host MDM2 does not target Tat to degradation, but activates its transactivation function and fosters interaction with CCNT1 and TAR RNA. Phosphorylated by EIF2AK2 on serine and threonine residues adjacent to the basic region important for TAR RNA binding and function. Phosphorylation of Tat by EIF2AK2 is dependent on the prior activation of EIF2AK2 by dsRNA.

The protein resides in the host nucleus. It is found in the host nucleolus. Its subcellular location is the host cytoplasm. The protein localises to the secreted. In terms of biological role, transcriptional activator that increases RNA Pol II processivity, thereby increasing the level of full-length viral transcripts. Recognizes a hairpin structure at the 5'-LTR of the nascent viral mRNAs referred to as the transactivation responsive RNA element (TAR) and recruits the cyclin T1-CDK9 complex (P-TEFb complex) that will in turn hyperphosphorylate the RNA polymerase II to allow efficient elongation. The CDK9 component of P-TEFb and other Tat-activated kinases hyperphosphorylate the C-terminus of RNA Pol II that becomes stabilized and much more processive. Other factors such as HTATSF1/Tat-SF1, SUPT5H/SPT5, and HTATIP2 are also important for Tat's function. Besides its effect on RNA Pol II processivity, Tat induces chromatin remodeling of proviral genes by recruiting the histone acetyltransferases (HATs) CREBBP, EP300 and PCAF to the chromatin. This also contributes to the increase in proviral transcription rate, especially when the provirus integrates in transcriptionally silent region of the host genome. To ensure maximal activation of the LTR, Tat mediates nuclear translocation of NF-kappa-B by interacting with host RELA. Through its interaction with host TBP, Tat may also modulate transcription initiation. Tat can reactivate a latently infected cell by penetrating in it and transactivating its LTR promoter. In the cytoplasm, Tat is thought to act as a translational activator of HIV-1 mRNAs. Its function is as follows. Extracellular circulating Tat can be endocytosed by surrounding uninfected cells via the binding to several surface receptors such as CD26, CXCR4, heparan sulfate proteoglycans (HSPG) or LDLR. Neurons are rarely infected, but they internalize Tat via their LDLR. Through its interaction with nuclear HATs, Tat is potentially able to control the acetylation-dependent cellular gene expression. Modulates the expression of many cellular genes involved in cell survival, proliferation or in coding for cytokines or cytokine receptors. Tat plays a role in T-cell and neurons apoptosis. Tat induced neurotoxicity and apoptosis probably contribute to neuroAIDS. Circulating Tat also acts as a chemokine-like and/or growth factor-like molecule that binds to specific receptors on the surface of the cells, affecting many cellular pathways. In the vascular system, Tat binds to ITGAV/ITGB3 and ITGA5/ITGB1 integrins dimers at the surface of endothelial cells and competes with bFGF for heparin-binding sites, leading to an excess of soluble bFGF. The sequence is that of Protein Tat from Homo sapiens (Human).